Here is a 1193-residue protein sequence, read N- to C-terminus: Tubulin monoglutamylase TTLL4 (1193 aa).

Disordered stretches follow at residues 1 to 37 (MASA…EKPS) and 468 to 535 (VHLD…CSSL). The span at 24–34 (PSGTVSASPSE) shows a compositional bias: polar residues. The segment covering 472-482 (QPGKEPEEAKD) has biased composition (basic and acidic residues). Residues 502–515 (EPEDTEDELGDGLE) are compositionally biased toward acidic residues. Residues 599–942 (RRLLRWKMST…VLPNMEDIIS (344 aa)) enclose the TTL domain. At Ser686 the chain carries Phosphoserine. Residues Lys716, 722–723 (RG), 744–747 (QRYL), and 757–759 (KFD) each bind ATP. Arg722 lines the a protein pocket. Arg783 serves as a coordination point for L-glutamate. An ATP-binding site is contributed by 804 to 805 (TN). L-glutamate is bound by residues Tyr806, Ser807, and Lys828. Asp888, Glu901, and Asn903 together coordinate Mg(2+). The interval 913–1027 (PLDISIKGQM…RGQFERIFPS (115 aa)) is c-MTBD region. L-glutamate is bound at residue Lys919. Low complexity predominate over residues 943–960 (SSSSPSSSSGSSTSLPSS). Disordered stretches follow at residues 943-966 (SSSS…DKCQ) and 1092-1193 (MTTS…AVSS). Composition is skewed to polar residues over residues 1092-1102 (MTTSKGDGTPN) and 1131-1153 (SQAG…NTSK). A compositionally biased stretch (low complexity) spans 1168 to 1182 (SGQSSRLSAASASQS). Residues 1183 to 1193 (VTDSRLTAVSS) show a composition bias toward polar residues.

This sequence belongs to the tubulin--tyrosine ligase family. Mg(2+) serves as cofactor. Highly expressed in testis. Expressed in brain, heart, kidney, liver, lung, muscle and spleen. In the brain, expressed in ependymal cilia, the cortex and the striatum. Expressed in blastomere.

The protein localises to the cytoplasm. It localises to the cell projection. Its subcellular location is the cilium. It is found in the cytoskeleton. The protein resides in the cilium basal body. It carries out the reaction L-glutamyl-[protein] + L-glutamate + ATP = gamma-L-glutamyl-L-glutamyl-[protein] + ADP + phosphate + H(+). Functionally, monoglutamylase which modifies both tubulin and non-tubulin proteins, adding a single glutamate on the gamma-carboxyl group of specific glutamate residues of target proteins. Involved in the side-chain initiation step of the polyglutamylation reaction but not in the elongation step. Preferentially modifies beta-tail tubulin over the alpha-tubulin. Monoglutamylates nucleosome assembly proteins NAP1L1 and NAP1L4. Monoglutamylates nucleotidyltransferase CGAS, leading to inhibition of CGAS catalytic activity, thereby preventing antiviral defense function. Involved in KLF4 glutamylation which impedes its ubiquitination, thereby leading to somatic cell reprogramming, pluripotency maintenance and embryogenesis. The protein is Tubulin monoglutamylase TTLL4 of Mus musculus (Mouse).